The following is a 121-amino-acid chain: UPF0102 protein DehaBAV1_0707 (121 aa).

Belongs to the UPF0102 family.

The chain is UPF0102 protein DehaBAV1_0707 from Dehalococcoides mccartyi (strain ATCC BAA-2100 / JCM 16839 / KCTC 5957 / BAV1).